Here is a 196-residue protein sequence, read N- to C-terminus: Large ribosomal subunit protein uL18 (196 aa).

It belongs to the universal ribosomal protein uL18 family. As to quaternary structure, part of the 50S ribosomal subunit. Contacts the 5S and 23S rRNAs.

In terms of biological role, this is one of the proteins that bind and probably mediate the attachment of the 5S RNA into the large ribosomal subunit, where it forms part of the central protuberance. This is Large ribosomal subunit protein uL18 from Sulfurisphaera tokodaii (strain DSM 16993 / JCM 10545 / NBRC 100140 / 7) (Sulfolobus tokodaii).